Reading from the N-terminus, the 263-residue chain is Putative protein JayE (263 aa).

The protein belongs to the Mu gp47/PBSX XkdT family.

This is Putative protein JayE (jayE) from Escherichia coli (strain K12).